We begin with the raw amino-acid sequence, 151 residues long: Large ribosomal subunit protein bL9 (151 aa).

It belongs to the bacterial ribosomal protein bL9 family.

Functionally, binds to the 23S rRNA. The protein is Large ribosomal subunit protein bL9 of Francisella philomiragia subsp. philomiragia (strain ATCC 25017 / CCUG 19701 / FSC 153 / O#319-036).